Here is a 173-residue protein sequence, read N- to C-terminus: Phosphopantetheine adenylyltransferase (173 aa).

S9 contacts substrate. ATP is bound by residues 9-10 and H17; that span reads SF. Residues K41, T73, and R87 each coordinate substrate. ATP is bound by residues 88–90, E98, and 123–129; these read GVR and YQYLSSS.

Belongs to the bacterial CoaD family. Homohexamer. It depends on Mg(2+) as a cofactor.

The protein resides in the cytoplasm. It catalyses the reaction (R)-4'-phosphopantetheine + ATP + H(+) = 3'-dephospho-CoA + diphosphate. The protein operates within cofactor biosynthesis; coenzyme A biosynthesis; CoA from (R)-pantothenate: step 4/5. Functionally, reversibly transfers an adenylyl group from ATP to 4'-phosphopantetheine, yielding dephospho-CoA (dPCoA) and pyrophosphate. The chain is Phosphopantetheine adenylyltransferase from Limosilactobacillus fermentum (strain NBRC 3956 / LMG 18251) (Lactobacillus fermentum).